A 550-amino-acid polypeptide reads, in one-letter code: Solute carrier family 22 member 6 (550 aa).

Residues 1–9 (MAFNDLLQQ) lie on the Cytoplasmic side of the membrane. The chain crosses the membrane as a helical span at residues 10-30 (VGGVGRFQQIQVTLVVLPLLL). Topologically, residues 31–135 (MASHNTLQNF…LVCSHRALRQ (105 aa)) are extracellular. N-linked (GlcNAc...) asparagine glycans are attached at residues Asn-39, Asn-92, and Asn-113. A helical membrane pass occupies residues 136-156 (LAQSLYMVGVLLGAMVFGYLA). The Cytoplasmic segment spans residues 157-164 (DRLGRRKV). Residues 165-187 (LILNYLQTAVSGTCTAFAPNFSI) traverse the membrane as a helical segment. Over 188 to 195 (YCAFRLLS) the chain is Extracellular. A helical transmembrane segment spans residues 196–216 (GMSLAGISLNCMTLNVEWMPI). The Cytoplasmic portion of the chain corresponds to 217–224 (HTRACVGT). The chain crosses the membrane as a helical span at residues 225-245 (LIGYVYSLGQFLLAGVAYAVP). The Extracellular segment spans residues 246 to 248 (HWR). Residues 249 to 269 (HLQLLVSAPFFAFFIYSWFFI) form a helical membrane-spanning segment. Over 270–337 (ESARWHSSSG…ELLRCPTLRH (68 aa)) the chain is Cytoplasmic. Residues 338-358 (LFLCLSMLWFATSFAYYGLVM) form a helical membrane-spanning segment. At 359 to 368 (DLQGFGVSIY) the chain is on the extracellular side. A helical membrane pass occupies residues 369–389 (LIQVIFGAVDLPAKLVGFLVI). The Cytoplasmic portion of the chain corresponds to 390 to 395 (NSLGRR). Residues 396-416 (PAQMAALLLAGICILLNGVIP) traverse the membrane as a helical segment. Over 417–420 (QDQS) the chain is Extracellular. Residues 421-444 (IVRTSLAVPGKGCLAASFNCIFLY) form a helical membrane-spanning segment. At 445-455 (TGELYPTMIRQ) the chain is on the cytoplasmic side. Residues 456 to 475 (TGMGMGSTMARVGSIVSPLV) traverse the membrane as a helical segment. Over 476–484 (SMTAELYPS) the chain is Extracellular. Residues 485 to 505 (MPLFIYGAVPVAASAVTVLLP) form a helical membrane-spanning segment. The Cytoplasmic segment spans residues 506–550 (ETLGQPLPDTVQDLESRKGKQTRQQQEHQKYMVPLQASAQEKNGL). The segment at 514 to 550 (DTVQDLESRKGKQTRQQQEHQKYMVPLQASAQEKNGL) is disordered.

It belongs to the major facilitator (TC 2.A.1) superfamily. Organic cation transporter (TC 2.A.1.19) family. Post-translationally, glycosylated. Glycosylation is necessary for proper targeting of the transporter to the plasma membrane.

It localises to the cell membrane. It catalyses the reaction prostaglandin F2alpha(out) = prostaglandin F2alpha(in). The enzyme catalyses prostaglandin E2(out) = prostaglandin E2(in). In terms of biological role, involved in the renal elimination of endogenous and exogenous organic anions. Functions as organic anion exchanger when the uptake of one molecule of organic anion is coupled with an efflux of one molecule of endogenous dicarboxylic acid (glutarate, ketoglutarate, etc). Mediates the transport of prostaglandin E2 (PGE2) and prostaglandin F2-alpha (PGF2-alpha) and may be involved in their renal excretion. Also mediates the sodium-independent uptake of p-aminohippurate (PAH), 2,3-dimercapto-1-propanesulfonic acid (DMPS), cidofovir, adefovir, 9-(2-phosphonylmethoxyethyl) guanine (PMEG), 9-(2-phosphonylmethoxyethyl) diaminopurine (PMEDAP), ochratoxin (OTA), acyclovir (ACV), 3'-azido-3-'deoxythymidine (AZT), cimetidine (CMD), 2,4-dichloro-phenoxyacetate (2,4-D), hippurate (HA), indoleacetate (IA), indoxyl sulfate (IS) and 3-carboxy-4-methyl-5-propyl-2-furanpropionate (CMPF) and edaravone sulfate. PAH uptake is inhibited by p-chloromercuribenzenesulphonate (PCMBS), diethyl pyrocarbonate (DEPC), indomethacin, sulindac, diclofenac, carprofen, okadaic acid, benzothiazolylcysteine (BTC), S-chlorotrifluoroethylcysteine (CTFC), cysteine S-conjugates S-dichlorovinylcysteine (DCVC), furosemide, steviol, phorbol 12-myristate 13-acetate (PMA), calcium ionophore A23187, benzylpenicillin, bumetamide, losartan, probenecid, phenol red, urate, glutarate and alpha-ketoglutarate. This chain is Solute carrier family 22 member 6 (SLC22A6), found in Pongo abelii (Sumatran orangutan).